Reading from the N-terminus, the 611-residue chain is Chaperone protein DnaK (611 aa).

Position 173 is a phosphothreonine; by autocatalysis (Thr-173). The span at 577–592 (QAAAGQAEGAQGAQDA) shows a compositional bias: low complexity. Residues 577–611 (QAAAGQAEGAQGAQDAGTKKDNVVDAEFEEVKEDK) form a disordered region. Acidic residues predominate over residues 600–611 (VDAEFEEVKEDK).

It belongs to the heat shock protein 70 family.

Functionally, acts as a chaperone. This chain is Chaperone protein DnaK, found in Bacillus cereus (strain G9842).